A 242-amino-acid polypeptide reads, in one-letter code: Demethylmenaquinone methyltransferase (242 aa).

S-adenosyl-L-methionine contacts are provided by residues Thr62, Asp83, and 112–113 (DV).

Belongs to the class I-like SAM-binding methyltransferase superfamily. MenG/UbiE family.

The catalysed reaction is a 2-demethylmenaquinol + S-adenosyl-L-methionine = a menaquinol + S-adenosyl-L-homocysteine + H(+). The protein operates within quinol/quinone metabolism; menaquinone biosynthesis; menaquinol from 1,4-dihydroxy-2-naphthoate: step 2/2. Functionally, methyltransferase required for the conversion of demethylmenaquinol (DMKH2) to menaquinol (MKH2). This chain is Demethylmenaquinone methyltransferase, found in Protochlamydia amoebophila (strain UWE25).